Reading from the N-terminus, the 170-residue chain is Flavin reductase (170 aa).

NAD(+)-binding positions include Ser-51, His-138, and 159-162; that span reads FYRG.

This sequence belongs to the non-flavoprotein flavin reductase family. Homodimer. Likely forms a loose transient complex with monooxygenases for which it provides FMNH(2).

The enzyme catalyses FMNH2 + NAD(+) = FMN + NADH + 2 H(+). The catalysed reaction is FADH2 + NAD(+) = FAD + NADH + 2 H(+). Catalyzes the reduction of FMN, and to a lesser extent, FAD, using NADH as an electron donor. Is able to provide the FMNH(2) required for the Baeyer-Villiger oxidations catalyzed by 2,5-diketocamphane monooxygenases and 3,6-diketocamphane monooxygenase. NADPH acts as a very poor cosubstrate. The sequence is that of Flavin reductase from Pseudomonas putida (Arthrobacter siderocapsulatus).